Here is a 263-residue protein sequence, read N- to C-terminus: Protein OPG165 (263 aa).

The protein belongs to the orthopoxvirus OPG165 family.

This Homo sapiens (Human) protein is Protein OPG165 (OPG165).